A 782-amino-acid polypeptide reads, in one-letter code: Semaphorin-3G (782 aa).

The first 22 residues, 1 to 22 (MAPSAWAICWLLGGLLLHGGSS), serve as a signal peptide directing secretion. In terms of domain architecture, Sema spans 32–519 (RLRLSYRDLL…SRLGVAQLRL (488 aa)). Asn44 carries an N-linked (GlcNAc...) asparagine glycan. The cysteines at positions 105 and 116 are disulfide-linked. An N-linked (GlcNAc...) asparagine glycan is attached at Asn127. 5 disulfide bridges follow: Cys134/Cys143, Cys270/Cys382, Cys294/Cys342, Cys522/Cys540, and Cys603/Cys655. The region spanning 569 to 671 (PALQCLGQSQ…FSQTVVRLAL (103 aa)) is the Ig-like C2-type domain.

This sequence belongs to the semaphorin family.

Its subcellular location is the secreted. Its function is as follows. Has chemorepulsive activities for sympathetic axons. Ligand of NRP2. The sequence is that of Semaphorin-3G (SEMA3G) from Homo sapiens (Human).